The chain runs to 266 residues: Beta-lactamase OXA-20 (266 aa).

The N-terminal stretch at 1-21 (MIIRFLALLFSAVVLVSLGHA) is a signal peptide. Ser72 (acyl-ester intermediate) is an active-site residue. The residue at position 75 (Lys75) is an N6-carboxylysine. 210–212 (KTG) provides a ligand contact to substrate.

Belongs to the class-D beta-lactamase family.

The enzyme catalyses a beta-lactam + H2O = a substituted beta-amino acid. Inhibited by clavulanic acid. This is an oxacillin-hydrolyzing beta-lactamase. The sequence is that of Beta-lactamase OXA-20 (bla) from Pseudomonas aeruginosa.